The sequence spans 56 residues: Mitoregulin (56 aa).

At 2 to 9 (ADVSERTL) the chain is on the mitochondrial matrix side. The helical transmembrane segment at 10–27 (QVSVLVAFASGVVLGWQA) threads the bilayer. At 28 to 56 (NRLRRRYLDWRKRRLQDKLATTQKKLDLA) the chain is on the mitochondrial intermembrane side.

Belongs to the mitoregulin family. As to quaternary structure, interacts with mitochondrial trifunctional enzyme, a heterotetrameric complex composed of 2 HADHA subunits and 2 HADHB subunits. Interacts with cytochrome b5 reductase CYB5R3; the interaction is required to maintain cellular lipid composition and leads to stimulation of mitochondrial respiratory complex I activity. Interacts with ATP synthase subunit ATP5F1B/ATP5B. Enriched in heart and skeletal muscle (at protein level). Also enriched in adipose tissue with lower levels detected in liver, pancreas and brain (at protein level). Higher levels in differentiated myotubes than in satellite cells.

The protein resides in the mitochondrion inner membrane. Functionally, positively regulates mitochondrial complex assembly and/or stability. Increases mitochondrial membrane potential while decreasing mitochondrial reactive oxygen species. Increases mitochondrial respiration rate. Increased mitochondrial respiratory activity promotes myogenic differentiation which facilitates muscle growth and regeneration. Increases mitochondrial calcium retention capacity. Plays a role in maintenance of cellular lipid composition through its interaction with cytochrome b5 reductase CYB5R3 which is required for mitochondrial respiratory complex I activity. Interacts with the mitochondrial trifunctional enzyme complex (MTE) and enhances fatty acid beta-oxidation. Not required for MTE formation or stability. Modulates triglyceride clearance in adipocytes through its role in regulating fatty acid beta-oxidation and lipolysis. In Mus musculus (Mouse), this protein is Mitoregulin.